Here is a 296-residue protein sequence, read N- to C-terminus: Centromere protein O (296 aa).

The stretch at 17–105 (VLAHLERLET…NMKAILQAYR (89 aa)) forms a coiled coil.

Belongs to the CENP-O/MCM21 family. As to quaternary structure, component of the CENPA-CAD complex, composed of CENPI, CENPK, CENPL, CENPO, CENPP, CENPQ, CENPR and CENPS. The CENPA-CAD complex interacts with the CENPA-NAC complex, at least composed of CENPA, CENPC, CENPH, CENPM, CENPN, CENPT and CENPU.

It localises to the nucleus. The protein resides in the chromosome. Its subcellular location is the centromere. It is found in the kinetochore. Component of the CENPA-CAD (nucleosome distal) complex, a complex recruited to centromeres which is involved in assembly of kinetochore proteins, mitotic progression and chromosome segregation. May be involved in incorporation of newly synthesized CENPA into centromeres via its interaction with the CENPA-NAC complex. Modulates the kinetochore-bound levels of NDC80 complex. This Bos taurus (Bovine) protein is Centromere protein O (CENPO).